Reading from the N-terminus, the 517-residue chain is DNA relaxase MbeA (517 aa).

The O-(5'-phospho-DNA)-tyrosine intermediate role is filled by Y19. A divalent metal cation contacts are provided by H97, E104, and N106. Disordered stretches follow at residues 281-310 (YSPV…QEGR), 380-405 (PSVR…VTQS), and 496-517 (SLER…SLGW). Over residues 297–310 (GRGERGDDAAQEGR) the composition is skewed to basic and acidic residues. The span at 496-510 (SLERERQPEIQERTL) shows a compositional bias: basic and acidic residues.

The protein to E.coli MbaA and MbkA. Interacts with MbeB and MbeC to form the relaxosome. Mn(2+) is required as a cofactor. Co(2+) serves as cofactor. It depends on Ni(2+) as a cofactor.

The catalysed reaction is ATP-independent breakage of single-stranded DNA, followed by passage and rejoining.. Its function is as follows. Relaxase involved in plasmid ColE1 conjugative mobilization and is thus essential to promote the specific transfer of the plasmid during conjugation. First catalyzes the specific cleavage of one of the DNA strands at oriT, forming a covalent 5'-phosphotyrosine intermediate. The nic site corresponds to 5'-(1469)CTGG/CTTA(1462)-3' in the cleaved strand. The cleaved strand is then transferred through the dedicated type IV secretion apparatus. MbeA remains covalently linked at the 5' end of the strand, and once in the recipient cell, it probably catalyzes the rejoining of the two ends of the strand, re-forming the circular plasmid DNA. Is functional in vitro without a requirement for the conjugative accessory proteins. The polypeptide is DNA relaxase MbeA (mbeA) (Escherichia coli).